The sequence spans 430 residues: sn-glycerol-3-phosphate-binding periplasmic protein UgpB (430 aa).

Residues 1–20 form the signal peptide; sequence MRLISISTTIAFGFAFQAQA. Residues Tyr-62, Asp-86, Ser-141, Ser-268, Gly-302, Tyr-341, and Arg-392 each contribute to the sn-glycerol 3-phosphate site.

Belongs to the bacterial solute-binding protein 1 family. In terms of assembly, the complex is composed of two ATP-binding proteins (UgpC), two transmembrane proteins (UgpA and UgpE) and a solute-binding protein (UgpB).

Its subcellular location is the periplasm. Functionally, part of the ABC transporter complex UgpBAEC involved in sn-glycerol-3-phosphate (G3P) import. Binds G3P. The protein is sn-glycerol-3-phosphate-binding periplasmic protein UgpB (ugpB) of Rhizobium meliloti (strain 1021) (Ensifer meliloti).